Reading from the N-terminus, the 321-residue chain is Phosphate acyltransferase (321 aa).

The protein belongs to the PlsX family. In terms of assembly, homodimer. Probably interacts with PlsY.

It localises to the cytoplasm. It carries out the reaction a fatty acyl-[ACP] + phosphate = an acyl phosphate + holo-[ACP]. Its pathway is lipid metabolism; phospholipid metabolism. Functionally, catalyzes the reversible formation of acyl-phosphate (acyl-PO(4)) from acyl-[acyl-carrier-protein] (acyl-ACP). This enzyme utilizes acyl-ACP as fatty acyl donor, but not acyl-CoA. The chain is Phosphate acyltransferase from Chlamydia trachomatis serovar L2 (strain ATCC VR-902B / DSM 19102 / 434/Bu).